The chain runs to 219 residues: Transmembrane emp24 domain-containing protein 10 (219 aa).

The N-terminal stretch at 1–31 is a signal peptide; sequence MSGLSGPPARRGPFPLALLLLFLLGPRLVLA. The interval 1–142 is required for interaction with STX17; that stretch reads MSGLSGPPAR…KNYEEIAKVE (142 aa). Topologically, residues 32–185 are lumenal; it reads ISFHLPINSR…RDTNESTNTR (154 aa). One can recognise a GOLD domain in the interval 41-193; sequence RKCLREEIHK…TRVLYFSIFS (153 aa). The segment at 147–178 is required for TMED10 and TMED2 cis-Golgi network localization; it reads LEVELRRLEDLSESIVNDFAYMKKREEEMRDT. Arg171 and Arg176 each carry dimethylated arginine. Residue Asn179 is glycosylated (N-linked (GlcNAc...) asparagine). A helical membrane pass occupies residues 186–206; the sequence is VLYFSIFSMFCLIGLATWQVF. An interaction with COPG1 region spans residues 204–219; the sequence is QVFYLRRFFKAKKLIE. The Cytoplasmic portion of the chain corresponds to 207-219; the sequence is YLRRFFKAKKLIE. Residues 207–219 form an interaction with ARF1 and IL1B region; the sequence is YLRRFFKAKKLIE. The COPII vesicle coat-binding motif lies at 211 to 212; that stretch reads FF. The COPI vesicle coat-binding signature appears at 211–219; that stretch reads FFKAKKLIE.

This sequence belongs to the EMP24/GP25L family. In terms of assembly, predominantly dimeric and to a lesser extent monomeric in the ER. Monomer and dimer in ERGIC and cis-Golgi network. Forms homooligomer (via GOLD domain); the assembly is promoted by direct binding with leaderless cargos and may form a protein channel that facilitates cargo entry into the ERGIC. Forms heterooligomeric complexes with other members of the p24 family such as TMED2, TMED7 and TMED9. Interacts (via GOLD domain) with TMED2 (via GOLD domain); the complex is required for export of TMED10 from the ER to the cis-Golgi network; the complex is proposed to be involved in cis-Golgi network dynamics and / or biogenesis. Associates with the COPI vesicle coat subunits (coatomer). Tetramerization of the cytoplasmic domain at the Golgi membrane in vitro; the complex is proposed to interact with COPI coatomer and induce budding of the vesicles. Interacts with COPG1; the interaction involves TMED10 homodimer. Interacts with ARF1 (GDP-bound); the interaction probably involves a TMED10 oligomer. Interacts with SEC23A, SEC24B, SEC24C and SEC24D components of the coat protein complex II/COPII, indicative of an association of TMED10 with the COPII vesicle coat. Interacts with CD59. Interacts with MPPE1/PGAP5; the complex might recruit and sort GPI-anchored proteins to the ER-exit site, or the interaction might lead to recycling of PGAP5 between the ER and the Golgi. Interacts with F2LR1/PAR2. Interacts with KDELR2/ERD2; the interaction is disrupted by KDELR2 ligand. Found in a complex composed at least of SURF4, TMED2 and TMED10. Associates with the presenilin-dependent gamma-secretase complex. Interacts with STX17; the interaction is direct. Interacts with IL-1; the interaction is direct. Interacts with RAB21 (active GTP-bound form); the interaction is indirect and regulates TMED10 abundance and localization at the Golgi.

It is found in the endoplasmic reticulum membrane. It localises to the endoplasmic reticulum-Golgi intermediate compartment membrane. The protein resides in the golgi apparatus membrane. The protein localises to the golgi apparatus. Its subcellular location is the cis-Golgi network membrane. It is found in the trans-Golgi network membrane. It localises to the cytoplasmic vesicle. The protein resides in the secretory vesicle membrane. The protein localises to the cell membrane. Its subcellular location is the melanosome. In terms of biological role, cargo receptor involved in protein vesicular trafficking and quality control in the endoplasmic reticulum (ER) and Golgi. The p24 protein family is a group of transmembrane proteins that bind coat protein complex I/COPI and coat protein complex II/COPII involved in vesicular trafficking between the membranes. Acts at the lumenal side for incorporation of secretory cargo molecules into transport vesicles and involved in vesicle coat formation at the cytoplasmic side. Mainly functions in the early secretory pathway and cycles between the ER, ER-Golgi intermediate compartment (ERGIC) and Golgi, mediating cargo transport through COPI and COPII-coated vesicles. In COPII vesicle-mediated anterograde transport, involved in the transport of GPI-anchored proteins by acting together with TMED2 as their cargo receptor; the function specifically implies SEC24C and SEC24D of the COPII vesicle coat and lipid raft-like microdomains of the ER. Recognizes GPI anchors structural remodeled in the ER by the GPI inositol-deacylase/PGAP1 and the metallophosphoesterase MPPE1/PGAP5. In COPI vesicle-mediated retrograde transport, involved in the biogenesis of COPI vesicles and vesicle coat recruitment. Involved in trafficking of amyloid beta A4 protein and soluble APP-beta release (independent from the modulation of gamma-secretase activity). Involved in the KDELR2-mediated retrograde transport of the toxin A subunit (CTX-A-K63)together with COPI and the COOH terminus of KDELR2. On Golgi membranes, acts as a primary receptor for ARF1-GDP, a GTP-binding protein involved in COPI-vesicle formation. Increases coatomer-dependent GTPase-activating activity of ARFGAP2 which mediates the hydrolysis of ARF1-bound GTP and therefore modulates protein trafficking from the Golgi apparatus. Involved in the exocytic trafficking of G protein-coupled receptors F2LR1/PAR2 (trypsin and tryspin-like enzyme receptor), OPRM1 (opioid receptor) and P2RY4 (UTD and UDP receptor) from the Golgi to the plasma membrane, thus contributing to receptor resensitization. In addition to its cargo receptor activity, may also act as a protein channel after oligomerization, facilitating the post-translational entry of leaderless cytoplasmic cargo into the ERGIC. Involved in the translocation into ERGIC, the vesicle entry and the secretion of leaderless cargos (lacking the secretion signal sequence), including the mature form of interleukin 1/IL-1 family members, the alpha-crystallin B chain HSPB5, the carbohydrate-binding proteins galectin-1/LGALS1 and galectin-3/LGALS3, the microtubule-associated protein Tau/MAPT, and the annexin A1/ANXA1; the translocation process is dependent on cargo protein unfolding and enhanced by chaperones HSP90AB1 and HSP90B1/GRP9. Could also associates with the presenilin-dependent gamma-secretase complex in order to regulate gamma-cleavages of the amyloid beta A4 protein to yield amyloid-beta 40/Abeta40. The protein is Transmembrane emp24 domain-containing protein 10 of Homo sapiens (Human).